Reading from the N-terminus, the 274-residue chain is Large ribosomal subunit protein uL2cz/uL2cy (274 aa).

Disordered regions lie at residues 1–21 (MAIH…VDSQ) and 224–274 (NPVD…RRSK).

This sequence belongs to the universal ribosomal protein uL2 family. As to quaternary structure, part of the 50S ribosomal subunit.

It is found in the plastid. It localises to the chloroplast. The sequence is that of Large ribosomal subunit protein uL2cz/uL2cy (rpl2-A) from Populus trichocarpa (Western balsam poplar).